Reading from the N-terminus, the 328-residue chain is Neuronal membrane glycoprotein M6-b (328 aa).

The interval 1 to 22 (MKPAMETAAEENTEQSQERKVN) is disordered. The chain crosses the membrane as a helical span at residues 71-91 (GGVPYASLVATILCFSGVALF). The N-linked (GlcNAc...) asparagine glycan is linked to Asn-113. The next 2 helical transmembrane spans lie at 130 to 150 (VIYGIASFFFLYGIILLAEGF) and 176 to 196 (FVFLTYVLGVAWLGVFGFSAV). Asn-217 carries an N-linked (GlcNAc...) asparagine glycan. A helical membrane pass occupies residues 265–285 (FIVACAGAGATVIALIHFLMI). Phosphoserine is present on residues Ser-318, Ser-320, and Ser-326.

It belongs to the myelin proteolipid protein family. In terms of assembly, interacts with SERT. As to expression, widely expressed. In the brain, expressed in neurons and oligodendrocytes.

It localises to the membrane. The protein localises to the cell membrane. Functionally, may be involved in neural development. Involved in regulation of osteoblast function and bone formation. Involved in matrix vesicle release by osteoblasts; this function seems to involve maintenance of the actin cytoskeleton. May be involved in cellular trafficking of SERT and thereby in regulation of serotonin uptake. The protein is Neuronal membrane glycoprotein M6-b (Gpm6b) of Mus musculus (Mouse).